Here is a 62-residue protein sequence, read N- to C-terminus: Photosystem II reaction center protein Z (62 aa).

2 consecutive transmembrane segments (helical) span residues 8 to 28 (AVFASIAIPFILVIGVPVVLA) and 41 to 61 (FSGASSWIGLVFLVGILNSLI).

Belongs to the PsbZ family. PSII is composed of 1 copy each of membrane proteins PsbA, PsbB, PsbC, PsbD, PsbE, PsbF, PsbH, PsbI, PsbJ, PsbK, PsbL, PsbM, PsbT, PsbY, PsbZ, Psb30/Ycf12, at least 3 peripheral proteins of the oxygen-evolving complex and a large number of cofactors. It forms dimeric complexes.

It localises to the plastid. The protein resides in the chloroplast thylakoid membrane. Functionally, may control the interaction of photosystem II (PSII) cores with the light-harvesting antenna, regulates electron flow through the 2 photosystem reaction centers. PSII is a light-driven water plastoquinone oxidoreductase, using light energy to abstract electrons from H(2)O, generating a proton gradient subsequently used for ATP formation. This chain is Photosystem II reaction center protein Z, found in Huperzia lucidula (Shining clubmoss).